Here is a 1249-residue protein sequence, read N- to C-terminus: MGHSRRPAGGEKKSRGFGRSKAVADVGDGRQTGGKPQVKKATFESTKKKEIGVSDLTLLSKISNEAINDNLKLRFEHDEIYTYIGHVLVSVNPFRDLGIYTDNVLQSYRGKNRLEVPPHVFAVAESAYYNMKSYKDNQCVIISGESGAGKTEAAKRIMQYIASVSGGTDSSIQHTKDMVLATNPLLESFGNAKTLRNNNSSRFGKYLELEFNTNGEPVGANITNYLLEKSRVVGQITNERNFHIFYQFTKAAPQKYRDLFGIQQPQSYLYTSRSKCFDVPGVDDSAEFRDTLNAMNVIGMTEGEQDEVFRMLAAILWIGNVQFAEDDSGNAVITDQSVVDYVAYLLEVDAAQVNKAFTIRVMETARGGRRGSVYEVPLNTVQALAVRDALAKAIYFNLFDWIVQRVNASLTARGEVANSIGILDIYGFEIFEKNSFEQLCINYVNEKLQQIFIQLTLKAEQDEYAREQIQWTPIKYFDNKVVCSLIEDKRPPGVFAALNDACATAHADSSAADNTFVGRLNFLSQNPNFENRQGQFIIKHYAGDVSYAVAGMTDKNKDQLLKDLLNLVGTSGNQFVHTLFPEQVNQDDKRRPPTASDKIKASANDLVATLMKAQPSYIRTIKPNDNKAPREYNVGNVLHQIKYLGLQENVRIRRAGFAYRQTFDKFVERFYLLSPKTSYAGDYTWTGDAESGARQILKDTSIPAEEYQMGITKVFVKTPETLFALEAMRDRYWHNMAIRIQRAWRNYLRYRTECAIRIQRFWRRTTGGLEFIKLRDQGHQLLNGRKERRRMSLLGSRRFLGDYIGVGNKGGPGEMVRNGAGISGSEEILFSCRGEVLVSKFGRSSKPAPRILALTNRHVYIIAQNLVNNQLVISSERTIPIGAIKAVGASNLKDDWFSIVVGSPQEPDPLVNCVFKTEFFTHLNNALRGQLNLKIADHIEYNKKPGKLATVKVVKDPAVARDDSYKSGTIHTGPGEPANSVSKPTPRPKQVSARPVTKGKLLRPGGPGGGPSKLAARPTPAAQPLPRATPQPAEPQPAARAVPQPVAAVAASHTRTGSTASVRAPPPPPPAAAPAPKKPTAKVLYDFNSQQSNELSIKAGEIVQIVSKEGNGWWLCMNMTTSAQGWTPEAYLEEQVAPTPKPAPPPPPAAPRSTPAPATNGAAAAAKAKPAPPAPPAKRPNMAARKAVPTPPPAPRDSAVSMNSHDSSGGSGRGTPNSMSNASLAGGLAEALRARQHAMQGKQDDDDDW.

The segment at 1–42 is disordered; it reads MGHSRRPAGGEKKSRGFGRSKAVADVGDGRQTGGKPQVKKAT. One can recognise a Myosin motor domain in the interval 51–730; it reads IGVSDLTLLS…TLFALEAMRD (680 aa). ATP is bound at residue 144-151; that stretch reads GESGAGKT. Ser372 is modified (phosphoserine). Residues 419–501 form an actin-binding region; sequence SIGILDIYGF…PGVFAALNDA (83 aa). IQ domains are found at residues 734–754 and 755–780; these read HNMA…RTEC and AIRI…QGHQ. One can recognise a TH1 domain in the interval 788–978; that stretch reads RRRMSLLGSR…TIHTGPGEPA (191 aa). Disordered stretches follow at residues 962-1079 and 1126-1249; these read DDSY…PKKP and WTPE…DDDW. Residues 1021–1035 are compositionally biased toward pro residues; it reads AAQPLPRATPQPAEP. Residues 1036 to 1051 show a composition bias toward low complexity; that stretch reads QPAARAVPQPVAAVAA. 2 stretches are compositionally biased toward pro residues: residues 1064–1077 and 1139–1150; these read APPP…PAPK and TPKPAPPPPPAA. Residues 1076–1137 form the SH3 domain; sequence PKKPTAKVLY…PEAYLEEQVA (62 aa). A compositionally biased stretch (low complexity) spans 1151–1169; it reads PRSTPAPATNGAAAAAKAK. Polar residues predominate over residues 1200–1221; that stretch reads VSMNSHDSSGGSGRGTPNSMSN. Positions 1222-1231 are enriched in low complexity; it reads ASLAGGLAEA.

It belongs to the TRAFAC class myosin-kinesin ATPase superfamily. Myosin family. Phosphorylation of the TEDS site (Ser-372) is required for the polarization of the actin cytoskeleton. Phosphorylation probably activates the myosin-I ATPase activity.

Its subcellular location is the cytoplasm. It localises to the cytoskeleton. It is found in the actin patch. Functionally, type-I myosin implicated in the organization of the actin cytoskeleton. Required for proper actin cytoskeleton polarization. At the cell cortex, assembles in patch-like structures together with proteins from the actin-polymerizing machinery and promotes actin assembly. Functions as actin nucleation-promoting factor (NPF) for the Arp2/3 complex. Plays an important role in polarized growth, spore germination, hyphal morphogenesis, and septal wall formation. This is Myosin-1 (myoA) from Aspergillus fumigatus (strain ATCC MYA-4609 / CBS 101355 / FGSC A1100 / Af293) (Neosartorya fumigata).